The following is a 497-amino-acid chain: Succinate-semialdehyde dehydrogenase [NADP(+)] (497 aa).

The active-site Proton acceptor is the Glu264. Residue Cys298 is the Nucleophile of the active site.

This sequence belongs to the aldehyde dehydrogenase family. As to quaternary structure, homotetramer.

The protein localises to the cytoplasm. The catalysed reaction is succinate semialdehyde + NAD(+) + H2O = succinate + NADH + 2 H(+). It carries out the reaction succinate semialdehyde + NADP(+) + H2O = succinate + NADPH + 2 H(+). It participates in amino-acid degradation; 4-aminobutanoate degradation. Inhibited by AMP, ADP anf ATP. Catalyzes the oxidation of succinate semialdehyde to succinate. Can utilize both NAD(+) or NADP(+) as a coenzyme, but has a 2.5-fold lower activity with NADP(+) than with NAD(+). Functions in a gamma-aminobutyrate (GABA) degradation pathway that allows growth utilizing GABA as a nitrogen source. Functions in the GABA shunt, which allows to bypass 2 reactions in the TCA cycle by removing alpha-ketoglutarate from the cycle and feeding succinate and NADH back into the cycle. This chain is Succinate-semialdehyde dehydrogenase [NADP(+)], found in Saccharomyces cerevisiae (strain ATCC 204508 / S288c) (Baker's yeast).